Here is a 370-residue protein sequence, read N- to C-terminus: Phosphoserine aminotransferase (370 aa).

R42 lines the L-glutamate pocket. Pyridoxal 5'-phosphate-binding residues include W108, T158, D182, and Q205. Position 206 is an N6-(pyridoxal phosphate)lysine (K206). Residue 247–248 (NT) participates in pyridoxal 5'-phosphate binding.

This sequence belongs to the class-V pyridoxal-phosphate-dependent aminotransferase family. SerC subfamily. In terms of assembly, homodimer. Pyridoxal 5'-phosphate serves as cofactor.

It localises to the cytoplasm. It carries out the reaction O-phospho-L-serine + 2-oxoglutarate = 3-phosphooxypyruvate + L-glutamate. The enzyme catalyses 4-(phosphooxy)-L-threonine + 2-oxoglutarate = (R)-3-hydroxy-2-oxo-4-phosphooxybutanoate + L-glutamate. It functions in the pathway amino-acid biosynthesis; L-serine biosynthesis; L-serine from 3-phospho-D-glycerate: step 2/3. The protein operates within cofactor biosynthesis; pyridoxine 5'-phosphate biosynthesis; pyridoxine 5'-phosphate from D-erythrose 4-phosphate: step 3/5. Its function is as follows. Catalyzes the reversible conversion of 3-phosphohydroxypyruvate to phosphoserine and of 3-hydroxy-2-oxo-4-phosphonooxybutanoate to phosphohydroxythreonine. This Albidiferax ferrireducens (strain ATCC BAA-621 / DSM 15236 / T118) (Rhodoferax ferrireducens) protein is Phosphoserine aminotransferase.